A 301-amino-acid polypeptide reads, in one-letter code: Heme A synthase (301 aa).

Residues 1–7 (MHKGLKR) lie on the Cytoplasmic side of the membrane. Residues 8 to 28 (LGVITSLGVLLVLIQGALVTN) traverse the membrane as a helical segment. At 29 to 56 (TGSGEGCGQTWPLCFGQVIPLDPPPETV) the chain is on the extracellular side. An intrachain disulfide couples Cys35 to Cys42. A helical membrane pass occupies residues 57–77 (IEFSHRLVAGIVGMLVILMAI). Glu58 is a catalytic residue. His61 provides a ligand contact to heme o. Residues 78 to 92 (WSWRRLKHMPETRFL) are Cytoplasmic-facing. The helical transmembrane segment at 93–113 (AVISVFMIIFQGLLGAGAVVF) threads the bilayer. Topologically, residues 114–117 (GQSD) are extracellular. The chain crosses the membrane as a helical span at residues 118–138 (LIMALHFGFSALSFASVVLLT). His123 lines the heme o pocket. The Cytoplasmic segment spans residues 139-159 (RLAFEDSNPQKQYAPIVSKAY). Residues 160–180 (KGYVIFVAIYSYVAIYTGAYV) traverse the membrane as a helical segment. At 181 to 215 (KHTNATLACSGFPLCNGQWVPDVFTEAIGVQLLHR) the chain is on the extracellular side. Cys189 and Cys195 are oxidised to a cystine. A heme b-binding site is contributed by His214. A helical transmembrane segment spans residues 216 to 236 (SAAILLSLLLLVLFIWTVKTF). The Cytoplasmic portion of the chain corresponds to 237–240 (RASR). The chain crosses the membrane as a helical span at residues 241-261 (VLVVCASLAMLLVIGQAASGV). The Extracellular segment spans residues 262–274 (AVVLTYNATLTLG). The chain crosses the membrane as a helical span at residues 275-295 (IFHALLISLLFTLLCYMVMLV). His277 is a heme b binding site. Topologically, residues 296-301 (TRHKAK) are cytoplasmic.

The protein belongs to the COX15/CtaA family. Type 1 subfamily. In terms of assembly, interacts with CtaB. Heme b is required as a cofactor.

It localises to the cell membrane. It carries out the reaction Fe(II)-heme o + 2 A + H2O = Fe(II)-heme a + 2 AH2. It participates in porphyrin-containing compound metabolism; heme A biosynthesis; heme A from heme O: step 1/1. Catalyzes the conversion of heme O to heme A by two successive hydroxylations of the methyl group at C8. The first hydroxylation forms heme I, the second hydroxylation results in an unstable dihydroxymethyl group, which spontaneously dehydrates, resulting in the formyl group of heme A. The chain is Heme A synthase from Shouchella clausii (strain KSM-K16) (Alkalihalobacillus clausii).